A 58-amino-acid chain; its full sequence is Potassium channel toxin alpha-KTx 9.9 (58 aa).

A signal peptide spans 1–21; sequence KKTSRLFTLVLIVLAMNVMMA. Positions 22 to 30 are excised as a propeptide; it reads IISDPVVEA. Disulfide bonds link Cys33–Cys49, Cys36–Cys54, and Cys40–Cys56.

It belongs to the short scorpion toxin superfamily. Potassium channel inhibitor family. Alpha-KTx 09 subfamily. In terms of tissue distribution, expressed by the venom gland.

It is found in the secreted. In terms of biological role, potassium channel inhibitor. The protein is Potassium channel toxin alpha-KTx 9.9 of Buthus israelis (Israeli scorpion).